A 448-amino-acid polypeptide reads, in one-letter code: DNA repair protein RadA (448 aa).

The C4-type zinc finger occupies 10–27; that stretch reads CQHCGFTSPKWLGKCVQC. 96–103 serves as a coordination point for ATP; that stretch reads GSPGVGKS. The short motif at 253–257 is the RadA KNRFG motif element; that stretch reads KNRFG. Positions 351–448 are lon-protease-like; the sequence is DVFINVSGGI…NVVGKIVEWM (98 aa).

It belongs to the RecA family. RadA subfamily.

Functionally, DNA-dependent ATPase involved in processing of recombination intermediates, plays a role in repairing DNA breaks. Stimulates the branch migration of RecA-mediated strand transfer reactions, allowing the 3' invading strand to extend heteroduplex DNA faster. Binds ssDNA in the presence of ADP but not other nucleotides, has ATPase activity that is stimulated by ssDNA and various branched DNA structures, but inhibited by SSB. Does not have RecA's homology-searching function. This is DNA repair protein RadA from Helicobacter pylori (strain J99 / ATCC 700824) (Campylobacter pylori J99).